A 637-amino-acid polypeptide reads, in one-letter code: Chaperone protein HtpG (637 aa).

The interval 1–338 is a; substrate-binding; sequence MTSTIDKNGA…SADLPLNISR (338 aa). A b region spans residues 339-552; that stretch reads EMIQESPILA…ESGPDRQLEK (214 aa). A c region spans residues 553–637; the sequence is ILLGVGQLAG…LRRSSAGGGD (85 aa).

The protein belongs to the heat shock protein 90 family. As to quaternary structure, homodimer.

Its subcellular location is the cytoplasm. In terms of biological role, molecular chaperone. Has ATPase activity. The chain is Chaperone protein HtpG from Nitrobacter winogradskyi (strain ATCC 25391 / DSM 10237 / CIP 104748 / NCIMB 11846 / Nb-255).